The chain runs to 1068 residues: DNA-directed RNA polymerase subunit beta (1068 aa).

Belongs to the RNA polymerase beta chain family. In terms of assembly, in plastids the minimal PEP RNA polymerase catalytic core is composed of four subunits: alpha, beta, beta', and beta''. When a (nuclear-encoded) sigma factor is associated with the core the holoenzyme is formed, which can initiate transcription.

It localises to the plastid. It is found in the chloroplast. The catalysed reaction is RNA(n) + a ribonucleoside 5'-triphosphate = RNA(n+1) + diphosphate. In terms of biological role, DNA-dependent RNA polymerase catalyzes the transcription of DNA into RNA using the four ribonucleoside triphosphates as substrates. The sequence is that of DNA-directed RNA polymerase subunit beta from Staurastrum punctulatum (Green alga).